Consider the following 1122-residue polypeptide: DNA polymerase (1122 aa).

Belongs to the DNA polymerase type-B family. As to quaternary structure, heterodimer with the terminal protein; this heterodimer binds to bp 9 to 18 of the genome. Forms a complex with viral pTP, DBP and hosts NFIA and POU2F1/OCT1 for initiation of replication.

The protein resides in the host nucleus. The enzyme catalyses DNA(n) + a 2'-deoxyribonucleoside 5'-triphosphate = DNA(n+1) + diphosphate. Functionally, eukaryotic-type DNA polymerase involved in viral genomic replication. DNA synthesis is protein primed, and acts in a strand displacement replication. Assembles in complex with viral pTP, DBP, host NFIA and host POU2F1/OCT1 on viral origin of replication. The polymerase covalently transfers dCMP onto pTP, thereby initiating complementary strand synthesis. This is DNA polymerase from Human adenovirus B serotype 7 (HAdV-7).